The chain runs to 565 residues: MIVLLLLISYCFAGNGVNVKNQLLLMPYPTTVNAQFGSNDCVEATSNIKMVLSNNCQNDPNCLSFMTFNFNHTITYPLQRQRNLEDFRVSIFAPIDIEEMKGNVVYSANTVNIELTGNNIEEIYPPLKIGIDESYSLDVTKEGIKISATTVYGARLGLETLIQMLRPYQGKYIIKHIPIMIEDKPRLQWRGLMIDVARNSFSRSAFVKIINAMAAIKANVLHIHLSDAQTFMFESKEYPELSKKGAFFQNKVLTQSFIKQLVQYGAKRGVIVYPEIDTPAHTASWNAGYPGVVADIWDYIVSSSMRYGENVLALNPANEKTFSIIDALMKEMGEVFGNDYVHFGGDEVWTGAWSKAKEYPAILEWMNKKGINTLKELEAYFNKYAQEQIIKNGKTPVCWEEVYQKGSADKKTIIQVWNNVNLLKEAATAGYKVILSAGYYLDMQMPLCSDYVADSCTNPNHMWVWTNRDMYRNDPIKELDYATKQNVLGGEACSWDESVDEQNFFDRVFQRFSAVAERFWSSEDITDPESHEVRANYVRCLGLRRNFLKGTGPLYHSYCQLPEDI.

An N-terminal signal peptide occupies residues 1–13 (MIVLLLLISYCFA). A glycan (N-linked (GlcNAc...) asparagine) is linked at Asn71. The active-site Proton donor is the Glu347.

The protein belongs to the glycosyl hydrolase 20 family. In terms of assembly, heterodimer of one alpha subunit and one beta subunit. Glycosylated.

It is found in the cytoplasmic granule. It localises to the secreted. The enzyme catalyses Hydrolysis of terminal non-reducing N-acetyl-D-hexosamine residues in N-acetyl-beta-D-hexosaminides.. Its function is as follows. Hydrolyzes the non-reducing end N-acetyl-D-hexosamine and/or sulfated N-acetyl-D-hexosamine of glycoconjugates. May contribute to amoebic pathogenicity and may be involved in the destruction of extracellular matrix components. In Entamoeba histolytica (strain ATCC 30459 / HM-1:IMSS / ABRM), this protein is Beta-hexosaminidase subunit beta.